A 1034-amino-acid chain; its full sequence is Vacuolar membrane protease (1034 aa).

Over 1–11 the chain is Cytoplasmic; it reads MAVKNPFGFTT. The chain crosses the membrane as a helical span at residues 12 to 32; sequence GPVTFWLIVVYAAFLIPLVWI. Residues 33 to 418 are Vacuolar-facing; sequence HESVPAVPSS…GFAILELRGL (386 aa). N-linked (GlcNAc...) asparagine glycosylation is found at Asn51 and Asn141. Zn(2+)-binding residues include His200 and Asp212. The Proton acceptor role is filled by Glu246. Zn(2+)-binding residues include Glu247, Glu272, and His345. Residues 419–439 form a helical membrane-spanning segment; sequence FAWTLTLLIVSPLVLALVTYI. Residues 440–470 are Cytoplasmic-facing; sequence LSRKDKYYFFSRKVTADEDDEPVSVGGWKGF. Residues 471 to 491 form a helical membrane-spanning segment; the sequence is FRFPFALVLSASITVLSAFLI. Residues 492–497 lie on the Vacuolar side of the membrane; sequence RRVNPH. A helical membrane pass occupies residues 498–518; the sequence is IIYSSPYAVWAMTLSLFFLVF. The Cytoplasmic segment spans residues 519-536; sequence WTIAKGASVVRPSALQRG. The helical transmembrane segment at 537–557 threads the bilayer; that stretch reads YAHIWLFVISWVILVAVTAAA. At 558–567 the chain is on the vacuolar side; the sequence is DRFKIASGYP. The chain crosses the membrane as a helical span at residues 568 to 588; sequence FAFFHSAVFVSALISLCDLFA. The Cytoplasmic segment spans residues 589–703; sequence LPSKQEFARN…NLPSWTWFFQ (115 aa). Residues 623 to 653 form a disordered region; the sequence is HSHVEDDVAEEPTETTPLRSGENGNGNNGTI. A helical membrane pass occupies residues 704-724; sequence LLLLAPITITVFLQIALFIVS. Topologically, residues 725–736 are vacuolar; the sequence is AIHSAAADGNDP. The helical transmembrane segment at 737 to 757 threads the bilayer; it reads ILVYAAIAAFSIIILLPATPF. At 758 to 762 the chain is on the cytoplasmic side; it reads IHRAS. A helical transmembrane segment spans residues 763-783; that stretch reads FYLPLFLLLVFFVTLIYNLVA. Residues 784 to 1034 are Vacuolar-facing; that stretch reads FPFSAENRLK…LVEGRKKFRA (251 aa). N-linked (GlcNAc...) asparagine glycosylation is found at Asn805, Asn866, and Asn879.

Belongs to the peptidase M28 family. It depends on Zn(2+) as a cofactor.

The protein localises to the vacuole membrane. Its function is as follows. May be involved in vacuolar sorting and osmoregulation. The protein is Vacuolar membrane protease of Colletotrichum graminicola (strain M1.001 / M2 / FGSC 10212) (Maize anthracnose fungus).